A 239-amino-acid polypeptide reads, in one-letter code: Small ribosomal subunit protein eS6B (239 aa).

Phosphoserine occurs at positions 148, 235, and 236.

It belongs to the eukaryotic ribosomal protein eS6 family. As to quaternary structure, component of the small ribosomal subunit (SSU). Mature yeast ribosomes consist of a small (40S) and a large (60S) subunit. The 40S small subunit contains 1 molecule of ribosomal RNA (18S rRNA) and at least 33 different proteins. The large 60S subunit contains 3 rRNA molecules (25S, 5.8S and 5S rRNA) and at least 46 different proteins. Interacts with snoRNA U3. uS11 interacts with MPP10. Component of the ribosomal small subunit (SSU) processome composed of at least 40 protein subunits and snoRNA U3.

It is found in the cytoplasm. Its function is as follows. Component of the ribosome, a large ribonucleoprotein complex responsible for the synthesis of proteins in the cell. The small ribosomal subunit (SSU) binds messenger RNAs (mRNAs) and translates the encoded message by selecting cognate aminoacyl-transfer RNA (tRNA) molecules. The large subunit (LSU) contains the ribosomal catalytic site termed the peptidyl transferase center (PTC), which catalyzes the formation of peptide bonds, thereby polymerizing the amino acids delivered by tRNAs into a polypeptide chain. The nascent polypeptides leave the ribosome through a tunnel in the LSU and interact with protein factors that function in enzymatic processing, targeting, and the membrane insertion of nascent chains at the exit of the ribosomal tunnel. eS6 is involved in nucleolar processing of pre-18S ribosomal RNA and ribosome assembly. The sequence is that of Small ribosomal subunit protein eS6B (rps602) from Schizosaccharomyces pombe (strain 972 / ATCC 24843) (Fission yeast).